A 78-amino-acid chain; its full sequence is Protein SlyX homolog (78 aa).

This sequence belongs to the SlyX family.

The polypeptide is Protein SlyX homolog (Xanthomonas campestris pv. campestris (strain 8004)).